Consider the following 407-residue polypeptide: Cell division control protein 12 (407 aa).

Position 2 is an N-acetylserine (Ser-2). The region spanning 31 to 314 is the Septin-type G domain; the sequence is EGGTFTVMLC…ETYRRLRLEG (284 aa). The G1 motif stretch occupies residues 41-48; sequence GESGLGKT. GTP is bound by residues 41 to 48, Thr-75, Gly-101, 180 to 188, Gly-247, and Arg-263; these read GESGLGKT and KADTLTAQE. The tract at residues 98–101 is G3 motif; it reads DTPG. The G4 motif stretch occupies residues 179-182; that stretch reads AKAD. Positions 344–406 form a coiled coil; that stretch reads EEENALKKYF…KSLQVKKSHL (63 aa).

The protein belongs to the TRAFAC class TrmE-Era-EngA-EngB-Septin-like GTPase superfamily. Septin GTPase family. Component of the septin complex which consists of CDC3, CDC10, CDC11, CDC12 and probably SHS1 and rearranges to a cortical collar of highly ordered filaments at the mother-bud-neck. A complex formed by CDC3, CDC10, CDC11 and CDC12 is capable of forming long filaments in vitro and the components seem to be present in a 2:2:2:2 arrangement in vivo. The filaments are proposed to be formed by the end-to-end polymerization of CDC3-CDC12-CDC11 complexes with CDC10 serving as a bridge to bundle the polymers into paired filaments. Component of the GIN4 complex composed of at least BNI5, CDC3, CDC10, CDC11, CDC12, GIN4, NAP1 and SHS1. Self-associates. Interacts with SYP1.

It localises to the membrane. It is found in the bud neck. Its function is as follows. Septins are GTPases involved in cytokinesis that assemble early in the cell cycle as a patch at the incipient bud site and form a ring approximate 15 minutes before bud emergence, which transforms into an hour-glass shaped collar of cortical filaments that spans both sides of the mother-bud neck. This collar persists until just before cytokinesis, when it splits into two rings that occupy opposite sides of the neck. The septins at the bud neck serve as a structural scaffold that recruits different components involved in diverse processes at specific stages during the cell cycle. Many proteins bind asymmetrically to the septin collar. The septin assembly is regulated by protein kinases GIN4 and/or CLA4. May act by recruiting MYO1 and HOF1, a protein involved in septation, to the site of cleavage. Septins are also involved in cell morphogenesis, bud site selection, chitin deposition, cell cycle regulation, cell compartmentalization and spore wall formation. This is Cell division control protein 12 (CDC12) from Saccharomyces cerevisiae (strain ATCC 204508 / S288c) (Baker's yeast).